We begin with the raw amino-acid sequence, 201 residues long: 3-isopropylmalate dehydratase small subunit (201 aa).

This sequence belongs to the LeuD family. LeuD type 1 subfamily. In terms of assembly, heterodimer of LeuC and LeuD.

The enzyme catalyses (2R,3S)-3-isopropylmalate = (2S)-2-isopropylmalate. The protein operates within amino-acid biosynthesis; L-leucine biosynthesis; L-leucine from 3-methyl-2-oxobutanoate: step 2/4. In terms of biological role, catalyzes the isomerization between 2-isopropylmalate and 3-isopropylmalate, via the formation of 2-isopropylmaleate. This chain is 3-isopropylmalate dehydratase small subunit, found in Glaesserella parasuis serovar 5 (strain SH0165) (Haemophilus parasuis).